Here is a 71-residue protein sequence, read N- to C-terminus: DNA-directed RNA polymerase subunit omega (71 aa).

This sequence belongs to the RNA polymerase subunit omega family. In terms of assembly, the RNAP catalytic core consists of 2 alpha, 1 beta, 1 beta' and 1 omega subunit. When a sigma factor is associated with the core the holoenzyme is formed, which can initiate transcription.

The catalysed reaction is RNA(n) + a ribonucleoside 5'-triphosphate = RNA(n+1) + diphosphate. In terms of biological role, promotes RNA polymerase assembly. Latches the N- and C-terminal regions of the beta' subunit thereby facilitating its interaction with the beta and alpha subunits. This Aromatoleum aromaticum (strain DSM 19018 / LMG 30748 / EbN1) (Azoarcus sp. (strain EbN1)) protein is DNA-directed RNA polymerase subunit omega.